Here is a 485-residue protein sequence, read N- to C-terminus: NADH-quinone oxidoreductase subunit N (485 aa).

Transmembrane regions (helical) follow at residues 8-28, 35-55, 71-91, 105-125, 127-147, 159-179, 203-223, 235-255, 271-291, 297-317, 326-346, 373-393, 408-430, and 455-475; these read LIAL…MLSI, FLNA…LWFV, GFAM…CTFA, FYLL…ANHL, TLFL…GYAF, YTIL…LVYA, LLAG…LVPF, PAPV…GVVM, VVLG…ALSQ, LLGY…IALQ, VGVY…VVSL, AAVM…LGFI, WWLV…RVAV, and IVVL…QPLI.

The protein belongs to the complex I subunit 2 family. NDH-1 is composed of 13 different subunits. Subunits NuoA, H, J, K, L, M, N constitute the membrane sector of the complex.

Its subcellular location is the cell inner membrane. The catalysed reaction is a quinone + NADH + 5 H(+)(in) = a quinol + NAD(+) + 4 H(+)(out). Its function is as follows. NDH-1 shuttles electrons from NADH, via FMN and iron-sulfur (Fe-S) centers, to quinones in the respiratory chain. The immediate electron acceptor for the enzyme in this species is believed to be ubiquinone. Couples the redox reaction to proton translocation (for every two electrons transferred, four hydrogen ions are translocated across the cytoplasmic membrane), and thus conserves the redox energy in a proton gradient. The sequence is that of NADH-quinone oxidoreductase subunit N from Salmonella paratyphi A (strain ATCC 9150 / SARB42).